A 172-amino-acid chain; its full sequence is Protein-export protein SecB (172 aa).

Residues Ala152–His172 are disordered.

It belongs to the SecB family. Homotetramer, a dimer of dimers. One homotetramer interacts with 1 SecA dimer.

It localises to the cytoplasm. Functionally, one of the proteins required for the normal export of preproteins out of the cell cytoplasm. It is a molecular chaperone that binds to a subset of precursor proteins, maintaining them in a translocation-competent state. It also specifically binds to its receptor SecA. In Cupriavidus taiwanensis (strain DSM 17343 / BCRC 17206 / CCUG 44338 / CIP 107171 / LMG 19424 / R1) (Ralstonia taiwanensis (strain LMG 19424)), this protein is Protein-export protein SecB.